Consider the following 536-residue polypeptide: Chlorophyllide a oxygenase, chloroplastic (536 aa).

The transit peptide at Met1 to Arg36 directs the protein to the chloroplast. Residues Ile123 to Arg150 adopt a coiled-coil conformation. The region spanning Trp221–Ile321 is the Rieske domain. [2Fe-2S] cluster contacts are provided by Cys262, His264, Cys281, and His284. Positions 360, 364, 367, and 372 each coordinate Fe cation.

The protein resides in the plastid. It localises to the chloroplast membrane. It is found in the chloroplast thylakoid membrane. The enzyme catalyses chlorophyllide a + 2 NADPH + 2 O2 + 2 H(+) = chlorophyllide b + 2 NADP(+) + 3 H2O. It participates in porphyrin-containing compound metabolism; chlorophyll biosynthesis. Catalyzes a two-step oxygenase reaction involved in the synthesis of chlorophyll b. Acts specifically on the non-esterified chlorophyllide a and not on chlorophyll a. The protein is Chlorophyllide a oxygenase, chloroplastic (CAO) of Arabidopsis thaliana (Mouse-ear cress).